The sequence spans 268 residues: Protein CONTINUOUS VASCULAR RING 1 (268 aa).

Over 1–70 the chain is Cytoplasmic; it reads MGDEKPVIVM…GWASKKFMTG (70 aa). Positions 21–48 are disordered; the sequence is IPVADSGDKDDGSSSKPSSSSSASSSSH. Residues 34 to 48 show a composition bias toward low complexity; the sequence is SSKPSSSSSASSSSH. Residues 71-91 form a helical membrane-spanning segment; it reads CVILLPIAITFYITWWFIHFV. Residues 92–103 are Extracellular-facing; sequence DGFFSPIYAQLG. A helical transmembrane segment spans residues 104–124; that stretch reads INVFGFGFLTSIAFIFLVGVF. At 125-268 the chain is on the cytoplasmic side; sequence MSSWLGASVL…LASIDRATSL (144 aa).

This sequence belongs to the plant COV1 protein family. Mostly expressed in flowers and stems, and, to a lower extent, in roots and leaves.

Its subcellular location is the membrane. Involved in the regulation of vascular patterning in the stem, probably by negatively regulating the differentiation of vascular tissue. The polypeptide is Protein CONTINUOUS VASCULAR RING 1 (Arabidopsis thaliana (Mouse-ear cress)).